The sequence spans 355 residues: uncharacterized protein (355 aa).

Disordered stretches follow at residues 1 to 121 (MPID…MELR), 226 to 253 (RLMN…KSSM), and 336 to 355 (NLHR…RKRT). Acidic residues predominate over residues 24-37 (LESESSSESDYEEV). Positions 65-87 (ETKTSSNFQNINPVQTIDNSASE) are enriched in polar residues. Positions 91–105 (DASSAEGGSNSAASS) are enriched in low complexity. Residues 106-117 (SEEEDSSDSEYE) show a composition bias toward acidic residues. The segment covering 226 to 245 (RLMNSEEREAQDLKDAEASR) has biased composition (basic and acidic residues).

This is an uncharacterized protein from Schizosaccharomyces pombe (strain 972 / ATCC 24843) (Fission yeast).